The primary structure comprises 454 residues: uncharacterized protein (454 aa).

ATP is bound at residue 125-132 (GDVGCGKT).

Belongs to the AFG1 ATPase family.

This is an uncharacterized protein from Schizosaccharomyces pombe (strain 972 / ATCC 24843) (Fission yeast).